The following is a 499-amino-acid chain: MIKRALISVFNKNGILKLAKFLNEKGVEILSTGGTYKHLKENGIPVIEVSEVTGFDEILDGRVKTLHPKIHGGILAIRDNKEHMDTIKNKGITPIDMVVVNLYPFFDKVKENISFEEKVEFIDIGGPTMIRAAAKNFQDVVVLTDVNDYDDVIDQIEKTGEVAYNTKKRLAGKVFNLMSAYDGAISRFLLEDEYPEYLAVPYKKKMDLRYGENPHQTAAFYEAAFGDGAMKGFEQLNGKELSYNNIKDMDIAWKVVNEFDETVCCALKHNSPCGVAIGENPLDAYKKAFECDDTSIFGGIVALNKVIDKPAAEEMVKIFLEIVIAPDFTADALEVLKSKKNLRVIKANEKPSDNFELAKVDGAMLVQSADNKLTEKMEVVTDKKPTDEEMRDMIFGMKVVKYVKSNAIVVVKNGAAVGIGGGQVNRIWPAKDAMERGKGAAVLASDAFFPFGDIVEEAHKNGIKAIIQPGGSIRDQESIDGCNKYGISMVMTGIRHFKH.

Positions 1 to 144 (MIKRALISVF…KNFQDVVVLT (144 aa)) constitute an MGS-like domain.

This sequence belongs to the PurH family.

The catalysed reaction is (6R)-10-formyltetrahydrofolate + 5-amino-1-(5-phospho-beta-D-ribosyl)imidazole-4-carboxamide = 5-formamido-1-(5-phospho-D-ribosyl)imidazole-4-carboxamide + (6S)-5,6,7,8-tetrahydrofolate. It carries out the reaction IMP + H2O = 5-formamido-1-(5-phospho-D-ribosyl)imidazole-4-carboxamide. It participates in purine metabolism; IMP biosynthesis via de novo pathway; 5-formamido-1-(5-phospho-D-ribosyl)imidazole-4-carboxamide from 5-amino-1-(5-phospho-D-ribosyl)imidazole-4-carboxamide (10-formyl THF route): step 1/1. The protein operates within purine metabolism; IMP biosynthesis via de novo pathway; IMP from 5-formamido-1-(5-phospho-D-ribosyl)imidazole-4-carboxamide: step 1/1. The chain is Bifunctional purine biosynthesis protein PurH from Clostridium acetobutylicum (strain ATCC 824 / DSM 792 / JCM 1419 / IAM 19013 / LMG 5710 / NBRC 13948 / NRRL B-527 / VKM B-1787 / 2291 / W).